The following is a 202-amino-acid chain: Tumor necrosis factor alpha-induced protein 8-like protein 3 (202 aa).

Over residues 1-10 (MDTDSGDLSE) the composition is skewed to acidic residues. The disordered stretch occupies residues 1-24 (MDTDSGDLSEGELSPGPEQFSSKS).

Belongs to the TNFAIP8 family.

It localises to the cytoplasm. It is found in the cell membrane. Its function is as follows. May act as a lipid transfer protein. The polypeptide is Tumor necrosis factor alpha-induced protein 8-like protein 3 (tnfaip8l3) (Xenopus laevis (African clawed frog)).